A 1101-amino-acid chain; its full sequence is ATP-dependent DNA helicase mph1 (1101 aa).

Disordered regions lie at residues 22–59 (PGTS…SPDR), 95–138 (LTQP…QYHD), 154–231 (FEEE…TNRP), and 250–270 (SSQR…PTHH). Over residues 24–48 (TSDTVESVQTNNRPAKQSDISISQG) the composition is skewed to polar residues. Over residues 170 to 190 (TPARTAAAPCAAPKGTAADVP) the composition is skewed to low complexity. Residues 191 to 202 (FDLDDIPDDAFD) show a composition bias toward acidic residues. Over residues 209-228 (PPRSTSQATRGPPVQSQFRT) the composition is skewed to polar residues. The 169-residue stretch at 296–464 (IAQRGLFHNL…AIIDDLGIAK (169 aa)) folds into the Helicase ATP-binding domain. 309–316 (LPTGLGKT) serves as a coordination point for ATP. The short motif at 412 to 415 (DEAH) is the DEAH box element. A Helicase C-terminal domain is found at 634 to 808 (YLKQVVLNHF…GTRFTFHDDK (175 aa)). Disordered stretches follow at residues 824–890 (RQID…PTPE) and 991–1067 (SRDP…QDAF). Positions 842–854 (RRARPPKRPPKKF) are enriched in basic residues.

The protein belongs to the DEAD box helicase family. DEAH subfamily. FANCM sub-subfamily. In terms of assembly, interacts with the MHF histone-fold complex to form the FANCM-MHF complex.

It is found in the nucleus. The catalysed reaction is ATP + H2O = ADP + phosphate + H(+). Its function is as follows. ATP-dependent DNA helicase involved in DNA damage repair by homologous recombination and in genome maintenance. Capable of unwinding D-loops. Plays a role in limiting crossover recombinants during mitotic DNA double-strand break (DSB) repair. Component of a FANCM-MHF complex which promotes gene conversion at blocked replication forks, probably by reversal of the stalled fork. The chain is ATP-dependent DNA helicase mph1 from Aspergillus fumigatus (strain CBS 144.89 / FGSC A1163 / CEA10) (Neosartorya fumigata).